Reading from the N-terminus, the 397-residue chain is Succinate--CoA ligase [ADP-forming] subunit beta (397 aa).

The region spanning 9 to 254 (KALLKSFGAP…ETEQDAKELE (246 aa)) is the ATP-grasp domain. ATP is bound by residues Lys-46, 53–55 (GRG), Glu-109, Ala-112, and Glu-117. Positions 209 and 223 each coordinate Mg(2+). Residues Asn-274 and 331-333 (GIM) each bind substrate.

It belongs to the succinate/malate CoA ligase beta subunit family. Heterotetramer of two alpha and two beta subunits. It depends on Mg(2+) as a cofactor.

The enzyme catalyses succinate + ATP + CoA = succinyl-CoA + ADP + phosphate. The catalysed reaction is GTP + succinate + CoA = succinyl-CoA + GDP + phosphate. Its pathway is carbohydrate metabolism; tricarboxylic acid cycle; succinate from succinyl-CoA (ligase route): step 1/1. Succinyl-CoA synthetase functions in the citric acid cycle (TCA), coupling the hydrolysis of succinyl-CoA to the synthesis of either ATP or GTP and thus represents the only step of substrate-level phosphorylation in the TCA. The beta subunit provides nucleotide specificity of the enzyme and binds the substrate succinate, while the binding sites for coenzyme A and phosphate are found in the alpha subunit. This chain is Succinate--CoA ligase [ADP-forming] subunit beta, found in Hyphomonas neptunium (strain ATCC 15444).